The chain runs to 274 residues: MNSKNYHQKKRFGQHWLVNKKILEKIKEIAVLNENDFILEIGPGKGALTSKLLNSEIKKLHAIELDKDLINLLNDKFNNNDKFSLQQGDILSVNLDSINKKITKVIANIPYNITGPILDIFIGRLGIIRKYNYEKIIFLMQKDVVDRILSKEGSPNAGALSIRMQLLSKIKRICDVPPSSFSPPPKVFSSLVVFEPIKNDLRLDISLEKYIDKLLRISFNSRRKMLRNTLNTILSNEEINELSESSKVCFNLRPQDISIDQWIKLAENCIKIKK.

Positions 15, 17, 42, 64, 89, and 108 each coordinate S-adenosyl-L-methionine.

Belongs to the class I-like SAM-binding methyltransferase superfamily. rRNA adenine N(6)-methyltransferase family. RsmA subfamily.

It is found in the cytoplasm. The enzyme catalyses adenosine(1518)/adenosine(1519) in 16S rRNA + 4 S-adenosyl-L-methionine = N(6)-dimethyladenosine(1518)/N(6)-dimethyladenosine(1519) in 16S rRNA + 4 S-adenosyl-L-homocysteine + 4 H(+). Its function is as follows. Specifically dimethylates two adjacent adenosines (A1518 and A1519) in the loop of a conserved hairpin near the 3'-end of 16S rRNA in the 30S particle. May play a critical role in biogenesis of 30S subunits. This chain is Ribosomal RNA small subunit methyltransferase A, found in Prochlorococcus marinus (strain MIT 9301).